The chain runs to 262 residues: Trypsin theta (262 aa).

Positions 1 to 19 (MHRLVVLLVCLAVGSACAG) are cleaved as a signal peptide. Residues 20–34 (TVGVSNGDPFEREGR) constitute a propeptide, activation peptide. The region spanning 35 to 260 (IVGGEDTTIG…LRKWILNASE (226 aa)) is the Peptidase S1 domain. C61 and C77 form a disulfide bridge. Residues H76 and D121 each act as charge relay system in the active site. 2 disulfides stabilise this stretch: C186-C203 and C212-C236. S216 serves as the catalytic Charge relay system.

Belongs to the peptidase S1 family.

Its subcellular location is the secreted. It is found in the extracellular space. The catalysed reaction is Preferential cleavage: Arg-|-Xaa, Lys-|-Xaa.. This chain is Trypsin theta (thetaTry), found in Drosophila melanogaster (Fruit fly).